The chain runs to 158 residues: UPF0725 protein At3g57210 (158 aa).

The protein belongs to the UPF0725 (EMB2204) family.

The polypeptide is UPF0725 protein At3g57210 (Arabidopsis thaliana (Mouse-ear cress)).